A 605-amino-acid polypeptide reads, in one-letter code: Elongation factor 4 (605 aa).

The tr-type G domain maps to 5–187 (ALIRNFSIIA…AVVERIPPPK (183 aa)). GTP is bound by residues 17-22 (DHGKST) and 134-137 (NKID).

It belongs to the TRAFAC class translation factor GTPase superfamily. Classic translation factor GTPase family. LepA subfamily.

The protein localises to the cell inner membrane. The catalysed reaction is GTP + H2O = GDP + phosphate + H(+). Its function is as follows. Required for accurate and efficient protein synthesis under certain stress conditions. May act as a fidelity factor of the translation reaction, by catalyzing a one-codon backward translocation of tRNAs on improperly translocated ribosomes. Back-translocation proceeds from a post-translocation (POST) complex to a pre-translocation (PRE) complex, thus giving elongation factor G a second chance to translocate the tRNAs correctly. Binds to ribosomes in a GTP-dependent manner. The polypeptide is Elongation factor 4 (Novosphingobium aromaticivorans (strain ATCC 700278 / DSM 12444 / CCUG 56034 / CIP 105152 / NBRC 16084 / F199)).